Here is a 518-residue protein sequence, read N- to C-terminus: U3 small nucleolar RNA-associated protein 15 homolog (518 aa).

At A2 the chain carries N-acetylalanine. WD repeat units lie at residues 36 to 75 (KEFG…PIKT), 78 to 117 (RFKD…PLRQ), 120 to 159 (GHTK…EILT), 162 to 202 (EHSD…SVLS), 204 to 242 (EHGQ…QLLV), 246 to 285 (NHHK…VVHS), and 287 to 326 (DYAA…KKES). Residue K249 forms a Glycyl lysine isopeptide (Lys-Gly) (interchain with G-Cter in SUMO2) linkage.

In terms of assembly, part of the small subunit (SSU) processome, composed of more than 70 proteins and the RNA chaperone small nucleolar RNA (snoRNA) U3. May be a component of the proposed t-UTP subcomplex of the ribosomal small subunit (SSU) processome containing at least UTP4, WDR43, HEATR1, UTP15, WDR75. Interacts directly with UTP4 and WDR43.

It localises to the nucleus. The protein resides in the nucleolus. Its function is as follows. Ribosome biogenesis factor. Involved in nucleolar processing of pre-18S ribosomal RNA. Required for optimal pre-ribosomal RNA transcription by RNA polymerase I. Part of the small subunit (SSU) processome, first precursor of the small eukaryotic ribosomal subunit. During the assembly of the SSU processome in the nucleolus, many ribosome biogenesis factors, an RNA chaperone and ribosomal proteins associate with the nascent pre-rRNA and work in concert to generate RNA folding, modifications, rearrangements and cleavage as well as targeted degradation of pre-ribosomal RNA by the RNA exosome. In Homo sapiens (Human), this protein is U3 small nucleolar RNA-associated protein 15 homolog.